The chain runs to 72 residues: Large ribosomal subunit protein bL31 (72 aa).

Positions 16, 18, 37, and 40 each coordinate Zn(2+).

Belongs to the bacterial ribosomal protein bL31 family. Type A subfamily. In terms of assembly, part of the 50S ribosomal subunit. Zn(2+) is required as a cofactor.

Binds the 23S rRNA. This Pseudomonas fluorescens (strain Pf0-1) protein is Large ribosomal subunit protein bL31.